The primary structure comprises 168 residues: Small ribosomal subunit protein uS5c (168 aa).

The S5 DRBM domain occupies 17–80 (WSERVIQITR…SDCKKQIIEF (64 aa)).

It belongs to the universal ribosomal protein uS5 family. In terms of assembly, part of the 30S ribosomal subunit. Contacts protein S4.

The protein localises to the plastid. The protein resides in the chloroplast. Functionally, with S4 and S12 plays an important role in translational accuracy. In Cyanidium caldarium (Red alga), this protein is Small ribosomal subunit protein uS5c (rps5).